We begin with the raw amino-acid sequence, 277 residues long: Phycobilisome rod-core linker polypeptide CpcG1 (277 aa).

Residues 11–189 (RTLDQRVVSY…YWRNKEISLS (179 aa)) form the PBS-linker domain.

It belongs to the phycobilisome linker protein family. As to quaternary structure, the phycobilisome is a hemidiscoidal structure that is composed of two distinct substructures: a core complex and a number of rods radiating from the core.

The protein localises to the cellular thylakoid membrane. Its function is as follows. Rod-core linker protein required for attachment of phycocyanin to allophycocyanin in cores of phycobilisomes. Linker polypeptides determine the state of aggregation and the location of the disk-shaped phycobiliprotein units within the phycobilisome and modulate their spectroscopic properties in order to mediate a directed and optimal energy transfer. The protein is Phycobilisome rod-core linker polypeptide CpcG1 (cpcG1) of Thermosynechococcus vestitus (strain NIES-2133 / IAM M-273 / BP-1).